The following is a 165-amino-acid chain: uncharacterized protein (165 aa).

Residues 15-35 form a helical membrane-spanning segment; the sequence is MSPAIILIGVLILIVLFVIKF. A coiled-coil region spans residues 67 to 119; that stretch reads ISQLNTLRATLAAKKKELKTLRTARKKECTEQLAKTQAEVDRIQAKIDNFSSR. Residues 123–156 are disordered; sequence VPLPGGEVGPPYNPPPPRTNTRPNPRPNPRPAQL. Pro residues predominate over residues 133–154; it reads PYNPPPPRTNTRPNPRPNPRPA.

It is found in the membrane. This is an uncharacterized protein from Acheta domesticus (House cricket).